Reading from the N-terminus, the 172-residue chain is Oleosin 18 kDa (172 aa).

Ala2 bears the N-acetylalanine mark. A polar region spans residues 2–38 (ADRDRAGQYYQQQRGQVGETVKGILPEKAPSASQALT). A hydrophobic region spans residues 39–110 (VATLFPLGGL…GGLSSLTFLA (72 aa)). The next 3 membrane-spanning stretches (helical) occupy residues 42–62 (LFPLGGLLLVLSGLALAASVV), 70–90 (VFLIFSPVLVPAALLIGLAVA), and 91–111 (GFLTSGALGLGGLSSLTFLAN). The tract at residues 147–172 (HAIQGRADQAGTGAGAGGGAGTKTSS) is disordered. Residues 158-172 (TGAGAGGGAGTKTSS) show a composition bias toward gly residues.

This sequence belongs to the oleosin family.

The protein resides in the lipid droplet. It is found in the membrane. Its function is as follows. May have a structural role to stabilize the lipid body during desiccation of the seed by preventing coalescence of the oil. Probably interacts with both lipid and phospholipid moieties of lipid bodies. May also provide recognition signals for specific lipase anchorage in lipolysis during seedling growth. This is Oleosin 18 kDa (OLE18) from Oryza sativa subsp. indica (Rice).